The primary structure comprises 675 residues: Acetyl-coenzyme A synthetase 1 (675 aa).

Positions 1 to 10 are enriched in polar residues; it reads MPESTQQSHL. The disordered stretch occupies residues 1–32; sequence MPESTQQSHLSLDHEKMQQPPKGFTERSKTKP. Residues 212-215 and Thr331 contribute to the CoA site; that span reads RGGK. Residues 407–409, 431–436, Asp522, and Arg537 each bind ATP; these read GEP and DTYWQT. Residue Ser545 participates in CoA binding. Arg548 provides a ligand contact to ATP. Arg609 contributes to the CoA binding site.

The protein belongs to the ATP-dependent AMP-binding enzyme family.

The enzyme catalyses acetate + ATP + CoA = acetyl-CoA + AMP + diphosphate. The sequence is that of Acetyl-coenzyme A synthetase 1 (ACS1) from Candida albicans (Yeast).